Here is a 258-residue protein sequence, read N- to C-terminus: Tryptophan synthase alpha chain (258 aa).

Catalysis depends on proton acceptor residues glutamate 52 and aspartate 63.

The protein belongs to the TrpA family. As to quaternary structure, tetramer of two alpha and two beta chains.

It catalyses the reaction (1S,2R)-1-C-(indol-3-yl)glycerol 3-phosphate + L-serine = D-glyceraldehyde 3-phosphate + L-tryptophan + H2O. It participates in amino-acid biosynthesis; L-tryptophan biosynthesis; L-tryptophan from chorismate: step 5/5. In terms of biological role, the alpha subunit is responsible for the aldol cleavage of indoleglycerol phosphate to indole and glyceraldehyde 3-phosphate. The sequence is that of Tryptophan synthase alpha chain from Streptococcus pneumoniae (strain JJA).